We begin with the raw amino-acid sequence, 115 residues long: Nascent polypeptide-associated complex protein (115 aa).

An NAC-A/B domain is found at 6–72 (PMNPKQLKKL…SEEEKAIINI (67 aa)).

This sequence belongs to the NAC-alpha family. As to quaternary structure, homodimer. Interacts with the ribosome. Binds ribosomal RNA.

Functionally, contacts the emerging nascent chain on the ribosome. This Pyrococcus horikoshii (strain ATCC 700860 / DSM 12428 / JCM 9974 / NBRC 100139 / OT-3) protein is Nascent polypeptide-associated complex protein.